We begin with the raw amino-acid sequence, 142 residues long: Succinate dehydrogenase subunit 6, mitochondrial (142 aa).

In terms of assembly, component of complex II composed of eight subunits in plants: four classical SDH subunits SDH1, SDH2, SDH3 and SDH4 (a flavoprotein (FP), an iron-sulfur protein (IP), and a cytochrome b composed of a large and a small subunit.), as well as four subunits unknown in mitochondria from bacteria and heterotrophic eukaryotes.

The protein resides in the mitochondrion inner membrane. It functions in the pathway carbohydrate metabolism; tricarboxylic acid cycle. In Oryza sativa subsp. japonica (Rice), this protein is Succinate dehydrogenase subunit 6, mitochondrial.